The primary structure comprises 551 residues: GMP synthase [glutamine-hydrolyzing] (551 aa).

Residues 1–28 (MTSSPTAAARTEGEAAPTVPTQVESGTA) are disordered. The span at 19–28 (VPTQVESGTA) shows a compositional bias: polar residues. The Glutamine amidotransferase type-1 domain maps to 37-227 (MVAILDFGSQ…VYHICGCEPE (191 aa)). Catalysis depends on Cys114, which acts as the Nucleophile. Active-site residues include His201 and Glu203. One can recognise a GMPS ATP-PPase domain in the interval 228-426 (WTTAAFIEEA…LGLPEEIVQR (199 aa)). Position 255–261 (255–261 (SGGVDSS)) interacts with ATP.

As to quaternary structure, homodimer.

It carries out the reaction XMP + L-glutamine + ATP + H2O = GMP + L-glutamate + AMP + diphosphate + 2 H(+). The protein operates within purine metabolism; GMP biosynthesis; GMP from XMP (L-Gln route): step 1/1. Its function is as follows. Catalyzes the synthesis of GMP from XMP. The polypeptide is GMP synthase [glutamine-hydrolyzing] (Gloeobacter violaceus (strain ATCC 29082 / PCC 7421)).